The sequence spans 623 residues: Pentatricopeptide repeat-containing protein At5g15340, mitochondrial (623 aa).

Residues 1–16 (MKCLSYQKVRLLLRHC) constitute a mitochondrion transit peptide. PPR repeat units lie at residues 42–72 (RSYLSNALFQFYASSGEMVTAQKLFDEIPLS), 75–109 (DNVDWTTLLSSFSRYGLLVNSMKLFVEMRRKRVEI), 110–144 (DDVSVVCLFGVCAKLEDLGFAQQGHGVAVKMGVLT), 145–179 (SVKVCNALMDMYGKCGLVSEVKRIFEELEEKSVVS), 180–206 (WTVVLDTVVKWEGLERGREVFHEMPER), 207–237 (NAVAWTVMVAGYLGAGFTREVLELLAEMVFR), 243–277 (NFVTLCSMLSACAQSGNLVVGRWVHVYALKKEMMM), 285–319 (DVMVGTALVDMYAKCGNIDSSMNVFRLMRKRNVVT), 320–346 (WNALFSGLAMHGKGRMVIDMFPQMIRE), 350–384 (DDLTFTAVLSACSHSGIVDEGWRCFHSLRFYGLEP), and 385–419 (KVDHYACMVDLLGRAGLIEEAEILMREMPVPPNEV). A type E motif region spans residues 420–495 (VLGSLLGSCS…IPGLSSIYVN (76 aa)). The type E(+) motif stretch occupies residues 496–526 (DSVHRFSSGDRSHPRTKEIYLKLNEVIERIR). The interval 527-623 (SAGYVPDVSG…GGSCSCSDYW (97 aa)) is type DYW motif.

Belongs to the PPR family. PCMP-H subfamily.

The protein localises to the mitochondrion. The polypeptide is Pentatricopeptide repeat-containing protein At5g15340, mitochondrial (PCMP-H91) (Arabidopsis thaliana (Mouse-ear cress)).